Consider the following 220-residue polypeptide: Aspartic protease inhibitor 4 (220 aa).

The first 23 residues, 1–23, serve as a signal peptide directing secretion; it reads MMKCLFLLCLCLLPILVFSSTFT. The propeptide occupies 24–32; sequence SQNPINLPS. The short motif at 26–31 is the Vacuolar targeting signal element; it reads NPINLP. Residue Asn51 is glycosylated (N-linked (GlcNAc...) asparagine). Cystine bridges form between Cys80-Cys125 and Cys174-Cys185.

The protein belongs to the protease inhibitor I3 (leguminous Kunitz-type inhibitor) family. As to expression, tubers.

Its subcellular location is the vacuole. Inhibits tightly cathepsin D (aspartic protease) and weakly trypsin (serine protease). May protect the plant by inhibiting proteases of invading organisms. In Solanum tuberosum (Potato), this protein is Aspartic protease inhibitor 4.